A 504-amino-acid chain; its full sequence is Maturase K (504 aa).

This sequence belongs to the intron maturase 2 family. MatK subfamily.

It is found in the plastid. It localises to the chloroplast. Usually encoded in the trnK tRNA gene intron. Probably assists in splicing its own and other chloroplast group II introns. The chain is Maturase K from Betula papyrifera (Paper birch).